The primary structure comprises 435 residues: Elongation factor 1-alpha (435 aa).

The tr-type G domain occupies 5 to 226; that stretch reads KTHINLVVIG…DTMEPPKRPT (222 aa). The G1 stretch occupies residues 14 to 21; it reads GHVDSGKS. Residue 14–21 coordinates GTP; it reads GHVDSGKS. Positions 70–74 are G2; that stretch reads GITID. The G3 stretch occupies residues 91-94; it reads DAPG. GTP-binding positions include 91 to 95 and 151 to 154; these read DAPGH and NKMD. Residues 151-154 are G4; sequence NKMD. The interval 190-192 is G5; that stretch reads SGF.

It belongs to the TRAFAC class translation factor GTPase superfamily. Classic translation factor GTPase family. EF-Tu/EF-1A subfamily.

The protein localises to the cytoplasm. Its function is as follows. This protein promotes the GTP-dependent binding of aminoacyl-tRNA to the A-site of ribosomes during protein biosynthesis. The polypeptide is Elongation factor 1-alpha (Cryptosporidium parvum).